The primary structure comprises 251 residues: Mast cell protease 3 (251 aa).

Residues 1–17 form the signal peptide; the sequence is MVLFLLLVALLSPAGEA. A propeptide spans 18 to 19 (activation peptide); sequence GK. One can recognise a Peptidase S1 domain in the interval 20 to 243; it reads IIGGHEAKPH…FLSWIQRTMR (224 aa). Cysteine 48 and cysteine 64 are disulfide-bonded. Histidine 63 (charge relay system) is an active-site residue. Asparagine 70 is a glycosylation site (N-linked (GlcNAc...) asparagine). The active-site Charge relay system is aspartate 107. Cystine bridges form between cysteine 141–cysteine 207 and cysteine 172–cysteine 186. Serine 201 functions as the Charge relay system in the catalytic mechanism.

Belongs to the peptidase S1 family. Granzyme subfamily.

Its subcellular location is the secreted. The protein localises to the cytoplasmic granule. This is Mast cell protease 3 from Ovis aries (Sheep).